The primary structure comprises 351 residues: Protein RecA (351 aa).

Position 68–75 (68–75 (GPESSGKT)) interacts with ATP.

It belongs to the RecA family.

It localises to the cytoplasm. Can catalyze the hydrolysis of ATP in the presence of single-stranded DNA, the ATP-dependent uptake of single-stranded DNA by duplex DNA, and the ATP-dependent hybridization of homologous single-stranded DNAs. It interacts with LexA causing its activation and leading to its autocatalytic cleavage. The chain is Protein RecA from Thermotoga neapolitana (strain ATCC 49049 / DSM 4359 / NBRC 107923 / NS-E).